The sequence spans 361 residues: Protein Wnt-2 (361 aa).

The first 27 residues, 1–27 (MNASVLGLCLSGPLVLLLAWLAPPVTS), serve as a signal peptide directing secretion. Intrachain disulfides connect C77/C88, C128/C136, C138/C158, C207/C221, C209/C216, C279/C310, C295/C305, C309/C349, C325/C340, C327/C337, and C332/C333. S213 carries O-palmitoleoyl serine; by PORCN lipidation. N-linked (GlcNAc...) asparagine glycosylation is present at N296.

The protein belongs to the Wnt family. In terms of processing, palmitoleoylation is required for efficient binding to frizzled receptors. Depalmitoleoylation leads to Wnt signaling pathway inhibition.

It localises to the secreted. It is found in the extracellular space. The protein localises to the extracellular matrix. In terms of biological role, ligand for members of the frizzled family of seven transmembrane receptors. Probable developmental protein. May be a signaling molecule which affects the development of discrete regions of tissues. Is likely to signal over only few cell diameters. The polypeptide is Protein Wnt-2 (WNT2) (Ornithorhynchus anatinus (Duckbill platypus)).